The primary structure comprises 287 residues: Protoheme IX farnesyltransferase (287 aa).

7 helical membrane-spanning segments follow: residues 19 to 39, 100 to 120, 134 to 154, 162 to 182, 212 to 232, 233 to 253, and 267 to 287; these read LMVAGATFFGAMLAVPHVTIT, MVLCLAGGLTSLLVGIGIVAV, FALLVGAAAGAMPPVVGWLAV, MLVVVYTLYLLWQIPHFWLHA, VWFHAYAVAVLMVPAFPLLEW, VGMRIMVTLCGIALLFAAMLA, and VLCAVMVVLLIDRLAIPVSLF.

The protein belongs to the UbiA prenyltransferase family. Protoheme IX farnesyltransferase subfamily.

It is found in the cell inner membrane. The enzyme catalyses heme b + (2E,6E)-farnesyl diphosphate + H2O = Fe(II)-heme o + diphosphate. The protein operates within porphyrin-containing compound metabolism; heme O biosynthesis; heme O from protoheme: step 1/1. Functionally, converts heme B (protoheme IX) to heme O by substitution of the vinyl group on carbon 2 of heme B porphyrin ring with a hydroxyethyl farnesyl side group. In Nitratidesulfovibrio vulgaris (strain ATCC 29579 / DSM 644 / CCUG 34227 / NCIMB 8303 / VKM B-1760 / Hildenborough) (Desulfovibrio vulgaris), this protein is Protoheme IX farnesyltransferase.